Here is a 178-residue protein sequence, read N- to C-terminus: MVGGGMPRGDPLVVGRVIGDVVDPFVRRVSLRVGYASRDVANGCELRPSAIADPPRVEVGGPDMRTFYTLVMVDPDAPSPSDPSLREYLHWLVTDIPATTGVSFGTEVVCYESPRPVLGIHRLVFLLFQQLGRQTVYAPGWRQNFSTRDFAELYNLGLPVAAVYFNCQRESGTGGRRM.

It belongs to the phosphatidylethanolamine-binding protein family. Expressed in leaves but not in shoot apex.

Its function is as follows. Involved in the regulation of vernalization and of flowering time. In Brachypodium distachyon (Purple false brome), this protein is Protein FLOWERING LOCUS T 1.